Here is a 393-residue protein sequence, read N- to C-terminus: 4-hydroxyphenylpyruvate dioxygenase (393 aa).

VOC domains lie at 17–148 (AFDH…LLER) and 179–339 (FLDH…IFSK). Fe cation-binding residues include His182, His267, and Glu350.

This sequence belongs to the 4HPPD family. It depends on Fe cation as a cofactor. As to expression, expressed in the hypodermis and intestine.

It catalyses the reaction 3-(4-hydroxyphenyl)pyruvate + O2 = homogentisate + CO2. Its pathway is amino-acid degradation; L-phenylalanine degradation; acetoacetate and fumarate from L-phenylalanine: step 3/6. Its function is as follows. Key enzyme in the degradation of tyrosine. The polypeptide is 4-hydroxyphenylpyruvate dioxygenase (Caenorhabditis elegans).